The chain runs to 929 residues: Protein translocase subunit SecA (929 aa).

Residues Q87, 105-109, and D512 contribute to the ATP site; that span reads GEGKT. Zn(2+)-binding residues include C914, C916, C925, and H926.

The protein belongs to the SecA family. As to quaternary structure, monomer and homodimer. Part of the essential Sec protein translocation apparatus which comprises SecA, SecYEG and auxiliary proteins SecDF-YajC and YidC. Zn(2+) serves as cofactor.

It localises to the cell inner membrane. The protein resides in the cytoplasm. The catalysed reaction is ATP + H2O + cellular proteinSide 1 = ADP + phosphate + cellular proteinSide 2.. Its function is as follows. Part of the Sec protein translocase complex. Interacts with the SecYEG preprotein conducting channel. Has a central role in coupling the hydrolysis of ATP to the transfer of proteins into and across the cell membrane, serving both as a receptor for the preprotein-SecB complex and as an ATP-driven molecular motor driving the stepwise translocation of polypeptide chains across the membrane. This is Protein translocase subunit SecA from Psychrobacter arcticus (strain DSM 17307 / VKM B-2377 / 273-4).